The primary structure comprises 47 residues: Photosystem II reaction center protein K (47 aa).

A propeptide spanning residues 1–10 (MALINFDLLA) is cleaved from the precursor. Residues 26 to 46 (LPLIPLFFFLLVFVWQAAVGF) form a helical membrane-spanning segment.

It belongs to the PsbK family. As to quaternary structure, PSII is composed of 1 copy each of membrane proteins PsbA, PsbB, PsbC, PsbD, PsbE, PsbF, PsbH, PsbI, PsbJ, PsbK, PsbL, PsbM, PsbT, PsbX, PsbY, Psb30/Ycf12, peripheral proteins PsbO, CyanoQ (PsbQ), PsbU, PsbV and a large number of cofactors. It forms dimeric complexes.

The protein resides in the cellular thylakoid membrane. One of the components of the core complex of photosystem II (PSII). PSII is a light-driven water:plastoquinone oxidoreductase that uses light energy to abstract electrons from H(2)O, generating O(2) and a proton gradient subsequently used for ATP formation. It consists of a core antenna complex that captures photons, and an electron transfer chain that converts photonic excitation into a charge separation. In Prochlorococcus marinus (strain NATL1A), this protein is Photosystem II reaction center protein K.